The sequence spans 72 residues: Translation initiation factor IF-1 (72 aa).

The S1-like domain occupies 1–72 (MAKQDVIELE…SRGRITYRYK (72 aa)).

Belongs to the IF-1 family. As to quaternary structure, component of the 30S ribosomal translation pre-initiation complex which assembles on the 30S ribosome in the order IF-2 and IF-3, IF-1 and N-formylmethionyl-tRNA(fMet); mRNA recruitment can occur at any time during PIC assembly.

The protein localises to the cytoplasm. Functionally, one of the essential components for the initiation of protein synthesis. Stabilizes the binding of IF-2 and IF-3 on the 30S subunit to which N-formylmethionyl-tRNA(fMet) subsequently binds. Helps modulate mRNA selection, yielding the 30S pre-initiation complex (PIC). Upon addition of the 50S ribosomal subunit IF-1, IF-2 and IF-3 are released leaving the mature 70S translation initiation complex. The sequence is that of Translation initiation factor IF-1 from Staphylococcus epidermidis (strain ATCC 35984 / DSM 28319 / BCRC 17069 / CCUG 31568 / BM 3577 / RP62A).